Consider the following 116-residue polypeptide: Nucleoid-associated protein A9601_00191 (116 aa).

It belongs to the YbaB/EbfC family. In terms of assembly, homodimer.

The protein resides in the cytoplasm. It is found in the nucleoid. Functionally, binds to DNA and alters its conformation. May be involved in regulation of gene expression, nucleoid organization and DNA protection. The sequence is that of Nucleoid-associated protein A9601_00191 from Prochlorococcus marinus (strain AS9601).